The primary structure comprises 190 residues: R46 site-specific recombinase (190 aa).

In terms of domain architecture, Resolvase/invertase-type recombinase catalytic spans 2 to 137 (RLFGYARVST…EGRQEAKLKG (136 aa)). The active-site O-(5'-phospho-DNA)-serine intermediate is serine 10. A DNA-binding region (H-T-H motif) is located at residues 161–180 (ATDIARRLSIARSTVYKILE).

It belongs to the site-specific recombinase resolvase family.

Site-specific recombination protein. This chain is R46 site-specific recombinase (tnpR), found in Escherichia coli.